The following is a 108-amino-acid chain: UPF0060 membrane protein RER_49640 (108 aa).

The next 4 helical transmembrane spans lie at 8 to 28 (LLFV…WQGI), 33 to 53 (GWIW…VATM), 62 to 82 (ILAA…VVMD), and 87 to 107 (DRFD…IMYA).

The protein belongs to the UPF0060 family.

Its subcellular location is the cell membrane. The protein is UPF0060 membrane protein RER_49640 of Rhodococcus erythropolis (strain PR4 / NBRC 100887).